The following is an 80-amino-acid chain: Defensin-like protein 1 (80 aa).

The signal sequence occupies residues 1 to 29 (MAKFASIIALLFAALVLFAAFEAPTMVEA). A Pyrrolidone carboxylic acid modification is found at glutamine 30. Cystine bridges form between cysteine 33/cysteine 80, cysteine 44/cysteine 65, cysteine 50/cysteine 74, and cysteine 54/cysteine 76.

It belongs to the DEFL family. As to quaternary structure, forms oligomers in its native state.

It is found in the secreted. Its function is as follows. Possesses antifungal activity sensitive to inorganic cations. The sequence is that of Defensin-like protein 1 (AFP1) from Raphanus sativus (Radish).